Here is a 103-residue protein sequence, read N- to C-terminus: Large ribosomal subunit protein uL24 (103 aa).

This sequence belongs to the universal ribosomal protein uL24 family. In terms of assembly, part of the 50S ribosomal subunit.

Its function is as follows. One of two assembly initiator proteins, it binds directly to the 5'-end of the 23S rRNA, where it nucleates assembly of the 50S subunit. In terms of biological role, one of the proteins that surrounds the polypeptide exit tunnel on the outside of the subunit. The protein is Large ribosomal subunit protein uL24 of Actinobacillus succinogenes (strain ATCC 55618 / DSM 22257 / CCUG 43843 / 130Z).